Reading from the N-terminus, the 1675-residue chain is Coadhesin (1675 aa).

At 1–1356 (QGNYYSYGGT…TIADQADAAK (1356 aa)) the chain is on the extracellular side. An F5/8 type C 1 domain is found at 11–160 (TPGTPIGCTN…ICMRVGVESC (150 aa)). TSP type-1 domains follow at residues 168–220 (NGAW…NDCV), 224–279 (NGGW…QFCP), 281–336 (DGGW…QCCP), 338–393 (HGGW…QTCP), 403–458 (NGNY…IPCP), 460–515 (NGNW…TACP), and 517–572 (DGGW…GPCP). Intrachain disulfides connect Cys180-Cys216, Cys184-Cys219, Cys194-Cys206, Cys236-Cys273, Cys240-Cys278, Cys251-Cys263, Cys293-Cys330, Cys297-Cys335, Cys308-Cys320, Cys350-Cys387, Cys354-Cys392, Cys365-Cys377, Cys415-Cys452, Cys419-Cys457, Cys430-Cys442, Cys472-Cys509, Cys476-Cys514, Cys487-Cys499, Cys528-Cys566, Cys532-Cys571, and Cys543-Cys555. Positions 567-588 (NKGPCPTSPPTISPPTTGSPAD) are disordered. VWFA domains lie at 595–769 (DLVF…MDRI), 778–958 (DIGF…FKAL), and 966–1141 (DLTF…ISII). Positions 1144-1198 (PSGLSKWSSWSACSKTCRYLGKAGTQIRTRDCKIPELGCDGMRIDTVECNKMDCE) constitute a TSP type-1 8 domain. 3 disulfide bridges follow: Cys1156/Cys1192, Cys1160/Cys1197, and Cys1175/Cys1182. Positions 1192–1336 (CNKMDCEGCG…PCMQAAVFGC (145 aa)) constitute an F5/8 type C 2 domain. The helical transmembrane segment at 1357 to 1377 (GILIVLWILAGILTFLLLMAC) threads the bilayer. Residues 1378–1675 (CYYCCWHVCC…RGEEWYSRWG (298 aa)) are Cytoplasmic-facing. Positions 1463 to 1480 (EKHVTAEDVKSEKPKYSE) are enriched in basic and acidic residues. A disordered region spans residues 1463–1491 (EKHVTAEDVKSEKPKYSEEASSGTIKSGS). Residues 1481–1491 (EASSGTIKSGS) show a composition bias toward polar residues.

In terms of tissue distribution, component of the acid-insoluble and acid-soluble organic matrix of the aragonitic skeleton (at protein level).

It localises to the membrane. In Acropora millepora (Staghorn coral), this protein is Coadhesin.